We begin with the raw amino-acid sequence, 112 residues long: T cell receptor alpha variable 12-1 (112 aa).

A signal peptide spans Met1–Ser20. The 90-residue stretch at Lys23–Asn112 folds into the Ig-like domain. Asn43 carries N-linked (GlcNAc...) asparagine glycosylation. Cys44 and Cys109 are joined by a disulfide.

Alpha-beta TR is a heterodimer composed of an alpha and beta chain; disulfide-linked. The alpha-beta TR is associated with the transmembrane signaling CD3 coreceptor proteins to form the TR-CD3 (TcR or TCR). The assembly of alpha-beta TR heterodimers with CD3 occurs in the endoplasmic reticulum where a single alpha-beta TR heterodimer associates with one CD3D-CD3E heterodimer, one CD3G-CD3E heterodimer and one CD247 homodimer forming a stable octameric structure. CD3D-CD3E and CD3G-CD3E heterodimers preferentially associate with TR alpha and TR beta chains, respectively. The association of the CD247 homodimer is the last step of TcR assembly in the endoplasmic reticulum and is required for transport to the cell surface.

Its subcellular location is the cell membrane. Functionally, v region of the variable domain of T cell receptor (TR) alpha chain that participates in the antigen recognition. Alpha-beta T cell receptors are antigen specific receptors which are essential to the immune response and are present on the cell surface of T lymphocytes. Recognize peptide-major histocompatibility (MH) (pMH) complexes that are displayed by antigen presenting cells (APC), a prerequisite for efficient T cell adaptive immunity against pathogens. Binding of alpha-beta TR to pMH complex initiates TR-CD3 clustering on the cell surface and intracellular activation of LCK that phosphorylates the ITAM motifs of CD3G, CD3D, CD3E and CD247 enabling the recruitment of ZAP70. In turn ZAP70 phosphorylates LAT, which recruits numerous signaling molecules to form the LAT signalosome. The LAT signalosome propagates signal branching to three major signaling pathways, the calcium, the mitogen-activated protein kinase (MAPK) kinase and the nuclear factor NF-kappa-B (NF-kB) pathways, leading to the mobilization of transcription factors that are critical for gene expression and essential for T cell growth and differentiation. The T cell repertoire is generated in the thymus, by V-(D)-J rearrangement. This repertoire is then shaped by intrathymic selection events to generate a peripheral T cell pool of self-MH restricted, non-autoaggressive T cells. Post-thymic interaction of alpha-beta TR with the pMH complexes shapes TR structural and functional avidity. The polypeptide is T cell receptor alpha variable 12-1 (Homo sapiens (Human)).